The primary structure comprises 725 residues: MTIENGIAKAIYVDGTKFVLNGRHVSYCFHVDDETGDLRTDHFGGRVTGAIPVDPSPVVDGWTGMPDRVRREFPDQGRGDFRIPALRIRQAEGHTVSALKYQSYTLLHGKPDLPGLPATFGTEKDVSTLVVHLRDEYSSVTADLIYSVFPEYNAIVRSVSITNNGFQPISIEALASFSTDLPYEDLEMISLRGDWAREAHRMRRKVEYGTQGFGSTTGFSSHLHNPFLALAHPSTTESQGEAWGFSLVYTGSFEVNVEKGSQGLTRAVLGFHPNQLSWPLSPGETLTSPECVAVYSNHGLGGMSRSLHRLFRDHLIKSKFATANRPVLLNSWEGLYFDIDETSMIRIAKESAALGVKLLVMDDGWFGKDYPRTSDAAGLGDWVPNPARFPNGLAPMVDQITSLKVANSSANLLFGIWVEPEMVNPDSALYREHPEWALHAGSYPRTEQRNQLVLNLALLEVQEFIINFMTDLLSSAKISYVKWDLNRGINETSAPKATHAYMLGMYKVFDTLTSRFPDVLWEGCAAGGGRFDPGILQYFPQIWTSDDSDAVERIFIQMGSSLAYPASAMGAHISAVPNHQTGRTTPLSLRAHVAMMGGSFGLELDPSQVSAEEKALIPELIALAEKVNPIVLTGDMWRLSLPEESNWPAVQFISQDQSQVVLFYFQLSPNVNHSMPRVRLQGLDEDAMYRVDGAGPYSGAMLMNLGLQYSFRTEYGSRVVFLEKQ.

N407 carries an N-linked (GlcNAc...) asparagine glycan. D484 (nucleophile) is an active-site residue. N-linked (GlcNAc...) asparagine glycosylation occurs at N490. Residue D546 is the Proton donor of the active site. The N-linked (GlcNAc...) asparagine glycan is linked to N672.

The protein belongs to the glycosyl hydrolase 36 family. In terms of assembly, homotetramer. It depends on Mg(2+) as a cofactor. NAD(+) serves as cofactor.

The protein localises to the secreted. It carries out the reaction Hydrolysis of terminal, non-reducing alpha-D-galactose residues in alpha-D-galactosides, including galactose oligosaccharides, galactomannans and galactolipids.. Its function is as follows. Hydrolyzes a variety of simple alpha-D-galactoside as well as more complex molecules such as oligosaccharides and polysaccharides. This Aspergillus terreus (strain NIH 2624 / FGSC A1156) protein is Probable alpha-galactosidase G (aglG).